The following is a 256-amino-acid chain: Ribonuclease HII (256 aa).

Residues Gln67–Ala255 enclose the RNase H type-2 domain. Asp73, Glu74, and Asp165 together coordinate a divalent metal cation.

Belongs to the RNase HII family. Mn(2+) is required as a cofactor. The cofactor is Mg(2+).

It localises to the cytoplasm. The enzyme catalyses Endonucleolytic cleavage to 5'-phosphomonoester.. Endonuclease that specifically degrades the RNA of RNA-DNA hybrids. The protein is Ribonuclease HII of Lactobacillus delbrueckii subsp. bulgaricus (strain ATCC 11842 / DSM 20081 / BCRC 10696 / JCM 1002 / NBRC 13953 / NCIMB 11778 / NCTC 12712 / WDCM 00102 / Lb 14).